The following is a 337-amino-acid chain: Glyceraldehyde-3-phosphate dehydrogenase (337 aa).

Residues 12–13 (RI), Asp-34, and Arg-79 contribute to the NAD(+) site. D-glyceraldehyde 3-phosphate contacts are provided by residues 150–152 (SCT), Thr-181, 210–211 (TG), and Arg-233. The active-site Nucleophile is the Cys-151. Asn-315 serves as a coordination point for NAD(+).

This sequence belongs to the glyceraldehyde-3-phosphate dehydrogenase family. Homotetramer.

The protein resides in the cytoplasm. The catalysed reaction is D-glyceraldehyde 3-phosphate + phosphate + NAD(+) = (2R)-3-phospho-glyceroyl phosphate + NADH + H(+). The protein operates within carbohydrate degradation; glycolysis; pyruvate from D-glyceraldehyde 3-phosphate: step 1/5. The protein is Glyceraldehyde-3-phosphate dehydrogenase (GPD) of Coccidioides immitis (strain RS) (Valley fever fungus).